The following is a 106-amino-acid chain: ATP-dependent Clp protease adapter protein ClpS (106 aa).

Residues 1-22 (MNEYHNSLKSKESVKDERQQKL) form a disordered region. Residues 9-20 (KSKESVKDERQQ) show a composition bias toward basic and acidic residues.

It belongs to the ClpS family. Binds to the N-terminal domain of the chaperone ClpA.

Involved in the modulation of the specificity of the ClpAP-mediated ATP-dependent protein degradation. The sequence is that of ATP-dependent Clp protease adapter protein ClpS from Photorhabdus laumondii subsp. laumondii (strain DSM 15139 / CIP 105565 / TT01) (Photorhabdus luminescens subsp. laumondii).